Consider the following 163-residue polypeptide: Carbon monoxide dehydrogenase small chain (163 aa).

In terms of domain architecture, 2Fe-2S ferredoxin-type spans 4 to 80 (KIITVNVNGK…GSEVLTVEGL (77 aa)). Residues C42, C47, C50, C62, C101, C104, C136, and C138 each coordinate [2Fe-2S] cluster.

As to quaternary structure, dimer of heterotrimers. Each heterotrimer consists of a large, a medium and a small subunit. [2Fe-2S] cluster serves as cofactor.

The catalysed reaction is CO + a quinone + H2O = a quinol + CO2. Functionally, catalyzes the oxidation of carbon monoxide to carbon dioxide. This is Carbon monoxide dehydrogenase small chain (cutS) from Hydrogenophaga pseudoflava (Pseudomonas carboxydoflava).